Here is a 339-residue protein sequence, read N- to C-terminus: Retroviral-like aspartic protease 1 (339 aa).

Positions 1–188 (MRNPGGPGWA…SEPEEILFAN (188 aa)) are excised as a propeptide. Residues 34-53 (VPAPFNSSRQGKNTAQPTEP) are disordered. The segment covering 38-53 (FNSSRQGKNTAQPTEP) has biased composition (polar residues). A glycan (N-linked (GlcNAc...) asparagine) is linked at N39. A helical transmembrane segment spans residues 55 to 75 (LSSVIAPTLFCAFLYLACVTA). In terms of domain architecture, Peptidase A2 spans 205-286 (VRFLVDSGAQ…AEEAIIGTDV (82 aa)). The active site involves D210. A glycan (N-linked (GlcNAc...) asparagine) is linked at N274. Positions 325 to 339 (LIEEEEGSSAPEGSH) are excised as a propeptide.

In terms of assembly, homodimer. Undergoes autocleavage which is necessary for activation of the protein. In terms of tissue distribution, highly expressed in stratified epithelia in skin, tongue, esophagus, forestomach and vagina. Also expressed in trachea, urinary bladder and thymus. Undetectable in simple epithelia. Within the epidermis, expressed exclusively in the granular layer (at protein level). Levels are elevated in benign skin tumors but are down-regulated in squamous cell carcinomas.

The protein resides in the membrane. Protease responsible for filaggrin processing, essential for the maintenance of a proper epidermis organization. This is Retroviral-like aspartic protease 1 from Mus musculus (Mouse).